A 388-amino-acid polypeptide reads, in one-letter code: uncharacterized protein (388 aa).

Positions Lys-68 to Thr-96 form a coiled coil. The tract at residues Gly-162–Val-388 is disordered. 2 stretches are compositionally biased toward basic and acidic residues: residues Leu-166–Pro-176 and Ala-196–Lys-208. Basic residues predominate over residues Gly-233–Arg-251. 2 stretches are compositionally biased toward low complexity: residues Gln-265–Gln-279 and Gln-293–Ala-346.

This is an uncharacterized protein from Frog virus 3 (isolate Goorha) (FV-3).